Consider the following 64-residue polypeptide: Large ribosomal subunit protein uL29 (64 aa).

The protein belongs to the universal ribosomal protein uL29 family.

This chain is Large ribosomal subunit protein uL29, found in Thiobacillus denitrificans (strain ATCC 25259 / T1).